A 2813-amino-acid chain; its full sequence is A-kinase anchor protein 13 (2813 aa).

2 disordered regions span residues 304 to 400 and 415 to 439; these read AQDP…QDSC and LSSC…QESL. The segment covering 427–439 has biased composition (polar residues); that stretch reads TKSSGMPTDQESL. Positions 494-516 are important for interaction with PRKAR2A; sequence WKNVLQGGESTKERFENSNIGTA. 3 disordered regions span residues 539–585, 632–653, and 690–726; these read AASS…VDQN, HQNS…SPIC, and SEST…RDTQ. Over residues 561–577 the composition is skewed to basic and acidic residues; the sequence is STEKTAETETSRSREES. The segment covering 690–702 has biased composition (polar residues); it reads SESTTARQPSSQD. Serine 790 bears the Phosphoserine mark. 2 disordered regions span residues 805–856 and 939–965; these read VPSQ…AAEL and ENAL…QFHE. Position 815 is a phosphothreonine (threonine 815). Residues 835–844 are compositionally biased toward basic and acidic residues; that stretch reads PDTRPLEDRA. Polar residues-rich tracts occupy residues 847–856 and 939–948; these read LSTSSTAAEL and ENALSSGTLQ. Threonine 953 carries the phosphothreonine modification. Serine 983 is subject to Phosphoserine. Disordered stretches follow at residues 1431–1455 and 1467–1542; these read GVLK…DSII and DITG…DSIT. A compositionally biased stretch (low complexity) spans 1467–1478; sequence DITGSSSSTDDT. Residues 1488 to 1497 show a composition bias toward polar residues; it reads GSDVSLSQIL. A phosphoserine mark is found at serine 1489, serine 1507, serine 1540, serine 1565, and serine 1602. Acidic residues predominate over residues 1525–1540; it reads SEPADPGDVEEEEMDS. The important for interaction with MAP2K3 stretch occupies residues 1585-1715; the sequence is RVLGDVVRRP…HSTFHNTSAN (131 aa). The interval 1601–1638 is disordered; it reads FSLEGLTGGAGVGNKPSSSLEVSSANAEELRHPFSGEE. A compositionally biased stretch (polar residues) spans 1615-1626; sequence KPSSSLEVSSAN. Over residues 1628 to 1638 the composition is skewed to basic and acidic residues; that stretch reads EELRHPFSGEE. Phosphoserine is present on residues serine 1642, serine 1645, and serine 1647. Lysine 1670 carries the post-translational modification N6-methyllysine. Residues 1755–1793 are disordered; sequence KMSSSKKSKEKEKEKDKIKEKEKDSKDKEKDKKTVNGHT. Residues 1758-1790 are a coiled coil; the sequence is SSKKSKEKEKEKDKIKEKEKDSKDKEKDKKTVN. Residues 1761-1788 are compositionally biased toward basic and acidic residues; it reads KSKEKEKEKDKIKEKEKDSKDKEKDKKT. The Phorbol-ester/DAG-type zinc-finger motif lies at 1791–1838; sequence GHTFSSIPVVGPISCSQCMKPFTNKDAYTCANCSAFVHKGCRESLASC. A phosphoserine mark is found at serine 1876, serine 1895, and serine 1929. Residues 1919 to 2813 form an interaction with ESR1 region; the sequence is MSNTWKFLSH…VSAEGEEIFC (895 aa). Residue threonine 1930 is modified to Phosphothreonine. Phosphoserine occurs at positions 1932 and 1945. Residues 1994–2191 form the DH domain; it reads KRQEVIYELM…KDVIGAVDSK (198 aa). Residues 2231 to 2333 enclose the PH domain; that stretch reads KLVRDGSVFL…WIQIIQDTIN (103 aa). A phosphoserine mark is found at serine 2345 and serine 2398. The stretch at 2345–2381 forms a coiled coil; that stretch reads SENEEEKKMLDTRARELKEQLHQKDQKILLLLEEKEM. Residues 2466-2502 are disordered; it reads ETFGGFDSHQMNASKGGEKEEGDDGQDLRRTESDSGL. A Phosphothreonine modification is found at threonine 2467. The residue at position 2473 (serine 2473) is a Phosphoserine. Basic and acidic residues predominate over residues 2491–2502; it reads QDLRRTESDSGL. 2 positions are modified to phosphoserine: serine 2563 and serine 2566. Positions 2568–2683 form a coiled coil; it reads LIEQEKQRSL…RLSQRQTERD (116 aa). A compositionally biased stretch (basic and acidic residues) spans 2665 to 2684; sequence QEQLRREAERLSQRQTERDL. Residues 2665–2813 form a disordered region; the sequence is QEQLRREAER…VSAEGEEIFC (149 aa). 3 positions are modified to phosphoserine: serine 2703, serine 2709, and serine 2728. Residues 2720 to 2735 are compositionally biased toward polar residues; the sequence is SLDSELSVSPKRNSIS. Low complexity predominate over residues 2760 to 2771; sequence QSQAPASTSAST.

Interacts with the cAMP-dependent protein kinase (PKA) holoenzyme and with the regulatory subunit PRKAR2A. Interacts with RHOA. Also interacts with RHOB and RHOC. Identified in a ternary complex with RHOA and PRKAR2A. Identified in a complex with NR3C1 and RHOA. Interacts with BRAF and KSR1. Identified in a complex with BRAF and KSR1. Component of a signaling complex containing at least AKAP13, PKN1, MAPK14, ZAK and MAP2K3. Within this complex, AKAP13 interacts directly with PKN1, which in turn recruits MAPK14, MAP2K3 and ZAK. Interacts (phosphorylated form) with YWHAB and YWHAZ. Interaction with YWHAB inhibits activation of RHOA, interferes with PKN1 binding and activation of MAP kinases. Interacts with GNA12. Interacts with IKBKB. Interacts with ESR1, THRA, PPARA and NME2. Interacts (via the C-terminal domain after the PH domain) with MEF2C and RXRB. Interacts (via the C-terminal domain after the PH domain) with PRKD1. In terms of tissue distribution, detected in mammary gland. Detected in heart (at protein level). Expressed as a 5.3 kb transcript in hematopoietic cells, skeletal muscle, lung, heart, estrogen-responsive reproductive tissues, including breast ductal epithelium. Also found in testis and breast cancer cell lines. Predominantly expressed as a 10 kb transcript in the heart and at lower levels in the lung, placenta, kidney, pancreas, skeletal muscle and liver. Transcripts of between 6-9 kb are also expressed in myeloid and lymphoid lineages, a variety of epithelial tissues, and in skeletal muscle.

It localises to the cytoplasm. The protein localises to the cytosol. The protein resides in the cell cortex. It is found in the nucleus. Its subcellular location is the membrane. Scaffold protein that plays an important role in assembling signaling complexes downstream of several types of G protein-coupled receptors. Activates RHOA in response to signaling via G protein-coupled receptors via its function as Rho guanine nucleotide exchange factor. May also activate other Rho family members. Part of a kinase signaling complex that links ADRA1A and ADRA1B adrenergic receptor signaling to the activation of downstream p38 MAP kinases, such as MAPK11 and MAPK14. Part of a signaling complex that links ADRA1B signaling to the activation of RHOA and IKBKB/IKKB, leading to increased NF-kappa-B transcriptional activity. Part of a RHOA-dependent signaling cascade that mediates responses to lysophosphatidic acid (LPA), a signaling molecule that activates G-protein coupled receptors and potentiates transcriptional activation of the glucocorticoid receptor NR3C1. Part of a signaling cascade that stimulates MEF2C-dependent gene expression in response to lysophosphatidic acid (LPA). Part of a signaling pathway that activates MAPK11 and/or MAPK14 and leads to increased transcription activation of the estrogen receptors ESR1 and ESR2. Part of a signaling cascade that links cAMP and EGFR signaling to BRAF signaling and to PKA-mediated phosphorylation of KSR1, leading to the activation of downstream MAP kinases, such as MAPK1 or MAPK3. Functions as a scaffold protein that anchors cAMP-dependent protein kinase (PKA) and PRKD1. This promotes activation of PRKD1, leading to increased phosphorylation of HDAC5 and ultimately cardiomyocyte hypertrophy. Has no guanine nucleotide exchange activity on CDC42, Ras or Rac. Required for normal embryonic heart development, and in particular for normal sarcomere formation in the developing cardiomyocytes. Plays a role in cardiomyocyte growth and cardiac hypertrophy in response to activation of the beta-adrenergic receptor by phenylephrine or isoproterenol. Required for normal adaptive cardiac hypertrophy in response to pressure overload. Plays a role in osteogenesis. The chain is A-kinase anchor protein 13 (AKAP13) from Homo sapiens (Human).